The following is a 247-amino-acid chain: Probable transcriptional regulatory protein ECA2494 (247 aa).

It belongs to the TACO1 family.

It is found in the cytoplasm. The polypeptide is Probable transcriptional regulatory protein ECA2494 (Pectobacterium atrosepticum (strain SCRI 1043 / ATCC BAA-672) (Erwinia carotovora subsp. atroseptica)).